Reading from the N-terminus, the 38-residue chain is Potassium channel toxin alpha-KTx 2.10 (38 aa).

Intrachain disulfides connect C7-C29, C13-C34, and C17-C36.

In terms of tissue distribution, expressed by the venom gland.

It localises to the secreted. Its function is as follows. Blocks human voltage-gated potassium (Kv) channel Kv1.2/KCNA2. Does not inhibit human Kv1.1/KCNA1 at 100nM concentration. The protein is Potassium channel toxin alpha-KTx 2.10 of Centruroides bonito (Scorpion).